Here is a 21-residue protein sequence, read N- to C-terminus: Fibrinogen beta chain (21 aa).

A compositionally biased stretch (acidic residues) spans 1–11; the sequence is EFPTDYDEGED. The segment at 1–21 is disordered; the sequence is EFPTDYDEGEDDRPKVGLGAR. At tyrosine 6 the chain carries Sulfotyrosine.

As to quaternary structure, heterohexamer; disulfide linked. Contains 2 sets of 3 non-identical chains (alpha, beta and gamma). The 2 heterotrimers are in head to head conformation with the N-termini in a small central domain. In terms of processing, conversion of fibrinogen to fibrin is triggered by thrombin, which cleaves fibrinopeptides A and B from alpha and beta chains, and thus exposes the N-terminal polymerization sites responsible for the formation of the soft clot.

The protein resides in the secreted. Its function is as follows. Cleaved by the protease thrombin to yield monomers which, together with fibrinogen alpha (FGA) and fibrinogen gamma (FGG), polymerize to form an insoluble fibrin matrix. Fibrin has a major function in hemostasis as one of the primary components of blood clots. In addition, functions during the early stages of wound repair to stabilize the lesion and guide cell migration during re-epithelialization. Was originally thought to be essential for platelet aggregation, based on in vitro studies using anticoagulated blood. However subsequent studies have shown that it is not absolutely required for thrombus formation in vivo. Enhances expression of SELP in activated platelets. Maternal fibrinogen is essential for successful pregnancy. Fibrin deposition is also associated with infection, where it protects against IFNG-mediated hemorrhage. May also facilitate the antibacterial immune response via both innate and T-cell mediated pathways. This is Fibrinogen beta chain (FGB) from Bison bonasus (European bison).